We begin with the raw amino-acid sequence, 363 residues long: Cobalt-precorrin-5B C(1)-methyltransferase (363 aa).

Belongs to the CbiD family.

It catalyses the reaction Co-precorrin-5B + S-adenosyl-L-methionine = Co-precorrin-6A + S-adenosyl-L-homocysteine. Its pathway is cofactor biosynthesis; adenosylcobalamin biosynthesis; cob(II)yrinate a,c-diamide from sirohydrochlorin (anaerobic route): step 6/10. Functionally, catalyzes the methylation of C-1 in cobalt-precorrin-5B to form cobalt-precorrin-6A. The chain is Cobalt-precorrin-5B C(1)-methyltransferase from Burkholderia pseudomallei (strain K96243).